A 397-amino-acid polypeptide reads, in one-letter code: 42.8 kDa protein in whiE locus (397 aa).

The interval 1-22 (MTVSPVVATDAPSTDATRTTAT) is disordered. Over residues 8–22 (ATDAPSTDATRTTAT) the composition is skewed to low complexity. One can recognise an ABM domain in the interval 46-137 (VRVVLMLDVH…DTHSLRYSVL (92 aa)).

Belongs to the SchA/CurD family.

The polypeptide is 42.8 kDa protein in whiE locus (Streptomyces coelicolor (strain ATCC BAA-471 / A3(2) / M145)).